Consider the following 159-residue polypeptide: Transcription elongation factor A protein-like 1 (159 aa).

The tract at residues 1–99 is disordered; that stretch reads MDKPRKENEE…CGVGKHKLEE (99 aa). Basic and acidic residues predominate over residues 17-34; sequence KTDEERPPVEHSPEKQSL. Residues 37–54 show a composition bias toward acidic residues; sequence QSSEEQSSEEEFFPEELL. Positions 64–80 are enriched in basic and acidic residues; sequence SEERPPQEGLSRKDLFE.

It belongs to the TFS-II family. TFA subfamily.

The protein resides in the nucleus. Its function is as follows. May be involved in transcriptional regulation. Modulates various viral and cellular promoters in a promoter context-dependent manner. Does not bind DNA directly. This Ateles geoffroyi (Black-handed spider monkey) protein is Transcription elongation factor A protein-like 1.